We begin with the raw amino-acid sequence, 384 residues long: Glucans biosynthesis protein C (384 aa).

Transmembrane regions (helical) follow at residues 17–37, 54–74, 91–111, 140–160, 173–193, 212–232, 240–260, 274–294, 311–331, and 338–358; these read AWLM…THSW, FIHA…SYML, VGIP…ILLQ, LWFL…FTWF, AISL…YAAI, FIVM…LAFI, FTTP…AYLL, TESV…FSLG, ASLF…AYIT, and LIGF…LYEI.

Belongs to the acyltransferase 3 family. OpgC subfamily.

The protein resides in the cell membrane. The protein operates within glycan metabolism; osmoregulated periplasmic glucan (OPG) biosynthesis. In terms of biological role, necessary for the succinyl substitution of periplasmic glucans. Could catalyze the transfer of succinyl residues from the cytoplasmic side of the membrane to the nascent glucan backbones on the periplasmic side of the membrane. The sequence is that of Glucans biosynthesis protein C from Salmonella typhimurium (strain LT2 / SGSC1412 / ATCC 700720).